The primary structure comprises 63 residues: Cecropin (63 aa).

An N-terminal signal peptide occupies residues 1 to 23 (MNFYKIFVFIALILALSVSQSEA). At arginine 62 the chain carries Arginine amide.

Monomer. As to expression, hemolymph.

The protein localises to the secreted. In terms of biological role, cecropins have lytic and antibacterial activity against several Gram-negative bacteria. This Glossina morsitans morsitans (Savannah tsetse fly) protein is Cecropin.